The primary structure comprises 949 residues: Translation initiation factor IF-2 (949 aa).

Disordered regions lie at residues 46–82, 145–176, and 188–361; these read LTASRPAESGPEEVRVTTNIVRRRSRPSAAAEPEAEA, EPAVAQEASPAVTAAKPVPATPAAPPQPERAS, and IPIT…KTEL. The span at 152–162 shows a compositional bias: low complexity; that stretch reads ASPAVTAAKPV. Residues 163-172 show a composition bias toward pro residues; that stretch reads PATPAAPPQP. Over residues 263–276 the composition is skewed to low complexity; that stretch reads PRDAAAPRPAGARP. Positions 334-344 are enriched in basic and acidic residues; sequence SREERQFDPFH. Residues 449-618 enclose the tr-type G domain; the sequence is ERPPVVTIMG…LLQADLMDLK (170 aa). Residues 458–465 are G1; sequence GHVDHGKT. Residue 458–465 participates in GTP binding; sequence GHVDHGKT. A G2 region spans residues 483-487; the sequence is GITQH. A G3 region spans residues 504 to 507; it reads DTPG. Residues 504–508 and 558–561 each bind GTP; these read DTPGH and NKID. The segment at 558-561 is G4; sequence NKID. A G5 region spans residues 594-596; sequence SAK.

This sequence belongs to the TRAFAC class translation factor GTPase superfamily. Classic translation factor GTPase family. IF-2 subfamily.

It is found in the cytoplasm. Its function is as follows. One of the essential components for the initiation of protein synthesis. Protects formylmethionyl-tRNA from spontaneous hydrolysis and promotes its binding to the 30S ribosomal subunits. Also involved in the hydrolysis of GTP during the formation of the 70S ribosomal complex. This chain is Translation initiation factor IF-2, found in Trichlorobacter lovleyi (strain ATCC BAA-1151 / DSM 17278 / SZ) (Geobacter lovleyi).